The sequence spans 186 residues: Mating-type-like protein ALPHA2 (186 aa).

The homeobox; TALE-type DNA-binding region spans 108–170 (ASYRGHRFTR…NRRRKQKSIY (63 aa)).

The protein belongs to the TALE/M-ATYP homeobox family.

It is found in the nucleus. Mating type proteins are sequence specific DNA-binding proteins that act as master switches in yeast differentiation by controlling gene expression in a cell type-specific fashion. In Candida glabrata (strain ATCC 2001 / BCRC 20586 / JCM 3761 / NBRC 0622 / NRRL Y-65 / CBS 138) (Yeast), this protein is Mating-type-like protein ALPHA2 (MTL1ALPHA2).